Here is a 690-residue protein sequence, read N- to C-terminus: MPVYAKAIFGSFPSVQQVRVENGERCLIEAMDELNKNEKGLYRPVRLENGDQISTTDDVLNGKLARVSYTPFEEFELVSNSKGSCMEYENQEQSSKIMEQMRILRQTEELCDVELLVAGSVIRAHRYILAAASPYFKAMFTNGMVEMKKLTIELQDIPEESVRIIVDYIYTDKIAITMNNVHQLIFTATVLQMDVIVVACQQFLATMITSHNCMSLYHFSDIYNCTNLISSIEDFASSQFRCIRKSPEFNSISFHHLKSLLNRSDLNVSEEQDVFETIVQWVSSNPRDRQHHFVQLFKTLRLHLVGWNFLCEAVNSNSYVKNSQECREIISAMVLDAMTPSKRKHPESNHENTSEYSASMACPSLTASSSSSTSTFRKSVAGAIFCAGGRGKAGGPFSSVEAYDWRRNQWIEVPDMMSQRRHVGVVSANGNLYAIGGHDGTAHLATAEAFQPSIRQWKRIASMKTARRGIAVASIENVIYAVGGLDDTTCYKTVERYDIEEDEWSTVADMDVQRGGVGVAVIGRYLFAIGGNDGTSSLETCERFDPMIDKWKRIASMKNRRAGSGVCVLDGYLYAIGGFDDNAPLETCERYDPDADKWITLDKMSSPRGGVGVAALGGKVYAIGGHDGSDYLNTVECYDPIANRWQPAAEIKECRAGAGVAWANVRMHQLSRTPEKCDSGCAPSGGSYCI.

The BTB domain occupies 111-178 (CDVELLVAGS…IYTDKIAITM (68 aa)). The BACK domain occupies 213 to 314 (CMSLYHFSDI…VGWNFLCEAV (102 aa)). Kelch repeat units lie at residues 383–430 (AIFC…SANG), 431–477 (NLYA…SIEN), 478–524 (VIYA…VIGR), 525–571 (YLFA…VLDG), 572–618 (YLYA…ALGG), and 620–665 (VYAI…WANV).

In terms of assembly, component of the BCR(kel-8) E3 ubiquitin ligase complex, at least composed of cul-3, kel-8 and rbx-1. Interacts with rpy-1. Expressed in neurons.

It is found in the synapse. It functions in the pathway protein modification; protein ubiquitination. Functionally, substrate-specific adapter of a BCR (BTB-CUL3-RBX1) E3 ubiquitin ligase complex that regulates degradation of glutamate receptors in neurons. The BCR(kel-8) ubiquitin ligase complex mediates ubiquitination and subsequent degradation of rpy-1. Indirectly regulates the protein turnover of glr-1, possibly via ubiquitination and degradation of rpy-1. The chain is Kelch-like protein 8 (kel-8) from Caenorhabditis elegans.